The chain runs to 507 residues: Probable aldehyde dehydrogenase (507 aa).

219 to 225 provides a ligand contact to NAD(+); the sequence is GFGVEAG. Active-site residues include glutamate 263 and cysteine 302.

This sequence belongs to the aldehyde dehydrogenase family.

The catalysed reaction is an aldehyde + NAD(+) + H2O = a carboxylate + NADH + 2 H(+). The chain is Probable aldehyde dehydrogenase from Streptomyces coelicolor (strain ATCC BAA-471 / A3(2) / M145).